Consider the following 293-residue polypeptide: NAD kinase (293 aa).

Residue aspartate 72 is the Proton acceptor of the active site. NAD(+) contacts are provided by residues 72 to 73, 146 to 147, arginine 157, lysine 174, aspartate 176, 187 to 192, and glutamine 247; these read DG, ND, and TAYALS.

The protein belongs to the NAD kinase family. A divalent metal cation is required as a cofactor.

It is found in the cytoplasm. The catalysed reaction is NAD(+) + ATP = ADP + NADP(+) + H(+). Its function is as follows. Involved in the regulation of the intracellular balance of NAD and NADP, and is a key enzyme in the biosynthesis of NADP. Catalyzes specifically the phosphorylation on 2'-hydroxyl of the adenosine moiety of NAD to yield NADP. The polypeptide is NAD kinase (Marinomonas sp. (strain MWYL1)).